Consider the following 210-residue polypeptide: Oxygen-insensitive NADPH nitroreductase (210 aa).

Residue 150-155 participates in NADP(+) binding; the sequence is GVSLMG.

Belongs to the nitroreductase family.

Reduction of a variety of nitroaromatic compounds using NADPH as source of reducing equivalents; two electrons are transferred. This Helicobacter acinonychis (strain Sheeba) protein is Oxygen-insensitive NADPH nitroreductase (rdxA).